A 487-amino-acid chain; its full sequence is Cysteine--tRNA ligase (487 aa).

Cys27 is a binding site for Zn(2+). A 'HIGH' region motif is present at residues 29-39; that stretch reads VTVYDLCHIGH. Zn(2+)-binding residues include Cys211, His236, and Glu240. The short motif at 268–272 is the 'KMSKS' region element; sequence KMSKS. Lys271 contacts ATP.

The protein belongs to the class-I aminoacyl-tRNA synthetase family. Monomer. Requires Zn(2+) as cofactor.

Its subcellular location is the cytoplasm. The catalysed reaction is tRNA(Cys) + L-cysteine + ATP = L-cysteinyl-tRNA(Cys) + AMP + diphosphate. In Thermodesulfovibrio yellowstonii (strain ATCC 51303 / DSM 11347 / YP87), this protein is Cysteine--tRNA ligase.